Here is a 591-residue protein sequence, read N- to C-terminus: L-fucose isomerase (591 aa).

Residues Glu-337 and Asp-361 each act as proton acceptor in the active site. Glu-337, Asp-361, and His-528 together coordinate Mn(2+).

Belongs to the L-fucose isomerase family. As to quaternary structure, homohexamer. Mn(2+) is required as a cofactor.

The protein localises to the cytoplasm. It catalyses the reaction L-fucose = L-fuculose. The protein operates within carbohydrate degradation; L-fucose degradation; L-lactaldehyde and glycerone phosphate from L-fucose: step 1/3. Converts the aldose L-fucose into the corresponding ketose L-fuculose. The polypeptide is L-fucose isomerase (Salmonella arizonae (strain ATCC BAA-731 / CDC346-86 / RSK2980)).